The sequence spans 184 residues: Photosystem I assembly protein Ycf4 (184 aa).

The next 2 helical transmembrane spans lie at 22-42 and 57-77; these read FCWAIILFLGSLGFLLVGTSS and IVFFPQGIVMSFYGIAGLFIS.

It belongs to the Ycf4 family.

Its subcellular location is the plastid. The protein resides in the chloroplast thylakoid membrane. In terms of biological role, seems to be required for the assembly of the photosystem I complex. The polypeptide is Photosystem I assembly protein Ycf4 (Helianthus annuus (Common sunflower)).